We begin with the raw amino-acid sequence, 158 residues long: HTH-type transcriptional repressor NicR (158 aa).

An HTH marR-type domain is found at 20–152 (TEQVGHLLRK…ILYLLRKMID (133 aa)). A DNA-binding region (H-T-H motif) is located at residues 66–89 (QAELIKATAVDQATIRGIVERLKA).

It participates in cofactor degradation; nicotinate degradation [regulation]. Functionally, transcriptional repressor for the nicCDEFTP and nicXR operons, encoding the lower aerobic nicotinate degradation pathway. Acts under non-induced conditions: repression of the nicCDEFTP and nicXR operons becomes alleviated in presence of 6-hydroxynicotinate (6HNA). The protein is HTH-type transcriptional repressor NicR (nicR) of Pseudomonas putida (strain ATCC 47054 / DSM 6125 / CFBP 8728 / NCIMB 11950 / KT2440).